Here is a 262-residue protein sequence, read N- to C-terminus: MNFVVIIPVRFFSTRFPGKALADINGKPMIVRVMENALDSGANKVIIATDSSCIARVIESEQSESEVCLTRSTHQSGTERLAEVAINYKFSDDQIIVHLQGDEPLLSSTMIRQVASILCSMSSTISMATLATPLSSFKEARDDNVVKVVINMNSNALYFSRSMIPWNTGDFVNHLDSKFSKTLLRHIGIYAYRVKFLRRYIAWTKSPLEQIEHLEQLRVLWHGEAIHVSVIDDVFNISVDTPESLSRVNTVFKKNKYATVHN.

This sequence belongs to the KdsB family.

Its subcellular location is the cytoplasm. It catalyses the reaction 3-deoxy-alpha-D-manno-oct-2-ulosonate + CTP = CMP-3-deoxy-beta-D-manno-octulosonate + diphosphate. The protein operates within nucleotide-sugar biosynthesis; CMP-3-deoxy-D-manno-octulosonate biosynthesis; CMP-3-deoxy-D-manno-octulosonate from 3-deoxy-D-manno-octulosonate and CTP: step 1/1. It participates in bacterial outer membrane biogenesis; lipopolysaccharide biosynthesis. Activates KDO (a required 8-carbon sugar) for incorporation into bacterial lipopolysaccharide in Gram-negative bacteria. This chain is 3-deoxy-manno-octulosonate cytidylyltransferase, found in Blochmanniella pennsylvanica (strain BPEN).